We begin with the raw amino-acid sequence, 166 residues long: Monodehydroascorbate reductase, fruit isozyme (166 aa).

Belongs to the FAD-dependent oxidoreductase family. Requires FAD as cofactor. The N-terminus is blocked.

The enzyme catalyses 2 monodehydro-L-ascorbate radical + NADH + H(+) = 2 L-ascorbate + NAD(+). Catalyzes the conversion of monodehydroascorbate to ascorbate, oxidizing NADH in the process. This Cucumis sativus (Cucumber) protein is Monodehydroascorbate reductase, fruit isozyme.